A 164-amino-acid chain; its full sequence is 2-keto-3-deoxy-D-glycero-D-galacto-9-phosphonononic acid phosphatase (164 aa).

The Mg(2+) site is built by D10 and D12. Substrate-binding positions include T34, 54-56 (TGE), 64-67 (RAEK), and K80. Residue D103 coordinates Mg(2+). A substrate-binding site is contributed by N106.

This sequence belongs to the KdsC family. Homotetramer. It depends on Mg(2+) as a cofactor.

The enzyme catalyses 3-deoxy-D-glycero-beta-D-galacto-non-2-ulopyranosonate 9-phosphate + H2O = 3-deoxy-D-glycero-beta-D-galacto-non-2-ulopyranosonate + phosphate. Its function is as follows. Involved in the biosynthesis of 2-keto-3-deoxy-D-glycero-D-galacto-nononic acid used in cell-wall polysaccharides. Catalyzes the hydrolysis of 2-keto-3-deoxy-D-glycero-D-galacto-9-phosphonononic acid (KDN-9-P) to yield 2-keto-3-deoxy-D-glycero-D-galacto-nononic acid (KDN). Also able to hydrolyze N-acetylneuraminate-9-phosphate (Neu5NAc-9-P), 2-keto-3-deoxy-D-manno-octulosonate-8-phosphate (KDO-8-P), phosphoenolpyruvate (PEP), gluconate 6-phosphate, tyrosine phosphate ester and glucose-6-P as substrate. This is 2-keto-3-deoxy-D-glycero-D-galacto-9-phosphonononic acid phosphatase from Bacteroides thetaiotaomicron (strain ATCC 29148 / DSM 2079 / JCM 5827 / CCUG 10774 / NCTC 10582 / VPI-5482 / E50).